The following is a 258-amino-acid chain: Ubiquinone/menaquinone biosynthesis C-methyltransferase UbiE (258 aa).

The tract at residues 1-21 (MPESRTSADGGMETSYGFREV) is disordered. S-adenosyl-L-methionine-binding positions include Thr81, Asp102, and 130 to 131 (NA).

The protein belongs to the class I-like SAM-binding methyltransferase superfamily. MenG/UbiE family.

It catalyses the reaction a 2-demethylmenaquinol + S-adenosyl-L-methionine = a menaquinol + S-adenosyl-L-homocysteine + H(+). It carries out the reaction a 2-methoxy-6-(all-trans-polyprenyl)benzene-1,4-diol + S-adenosyl-L-methionine = a 5-methoxy-2-methyl-3-(all-trans-polyprenyl)benzene-1,4-diol + S-adenosyl-L-homocysteine + H(+). It participates in quinol/quinone metabolism; menaquinone biosynthesis; menaquinol from 1,4-dihydroxy-2-naphthoate: step 2/2. It functions in the pathway cofactor biosynthesis; ubiquinone biosynthesis. Its function is as follows. Methyltransferase required for the conversion of demethylmenaquinol (DMKH2) to menaquinol (MKH2) and the conversion of 2-polyprenyl-6-methoxy-1,4-benzoquinol (DDMQH2) to 2-polyprenyl-3-methyl-6-methoxy-1,4-benzoquinol (DMQH2). The chain is Ubiquinone/menaquinone biosynthesis C-methyltransferase UbiE from Rhizobium leguminosarum bv. trifolii (strain WSM2304).